The following is a 329-amino-acid chain: Quinolinate synthase (329 aa).

Iminosuccinate is bound by residues His-44 and Ser-61. Cys-106 contributes to the [4Fe-4S] cluster binding site. Iminosuccinate contacts are provided by residues Tyr-132–Asn-134 and Ser-149. Cys-192 is a [4Fe-4S] cluster binding site. Residues His-218–Glu-220 and Thr-235 each bind iminosuccinate. Cys-285 contacts [4Fe-4S] cluster.

This sequence belongs to the quinolinate synthase family. Type 2 subfamily. It depends on [4Fe-4S] cluster as a cofactor.

It is found in the plastid. Its subcellular location is the cyanelle. The enzyme catalyses iminosuccinate + dihydroxyacetone phosphate = quinolinate + phosphate + 2 H2O + H(+). Its pathway is cofactor biosynthesis; NAD(+) biosynthesis; quinolinate from iminoaspartate: step 1/1. Its function is as follows. Catalyzes the condensation of iminoaspartate with dihydroxyacetone phosphate to form quinolinate. This Cyanophora paradoxa protein is Quinolinate synthase.